Consider the following 283-residue polypeptide: 5'-nucleotidase SurE (283 aa).

The a divalent metal cation site is built by Asp-14, Asp-15, Ser-47, and Asn-105.

The protein belongs to the SurE nucleotidase family. Requires a divalent metal cation as cofactor.

It is found in the cytoplasm. The catalysed reaction is a ribonucleoside 5'-phosphate + H2O = a ribonucleoside + phosphate. Its function is as follows. Nucleotidase that shows phosphatase activity on nucleoside 5'-monophosphates. This is 5'-nucleotidase SurE from Chlamydia trachomatis serovar D (strain ATCC VR-885 / DSM 19411 / UW-3/Cx).